A 102-amino-acid polypeptide reads, in one-letter code: MSRTENIEQIEESVEAEFKQPSMYKVILNNDDYTPMDFVIEILQLFFKKDEQQATEIMLAIHHKGKGICGIYPFGIAETKVAQVNQFARQNQHPLLCSLEEA.

Belongs to the ClpS family. Binds to the N-terminal domain of the chaperone ClpA.

Functionally, involved in the modulation of the specificity of the ClpAP-mediated ATP-dependent protein degradation. The chain is ATP-dependent Clp protease adapter protein ClpS from Shewanella halifaxensis (strain HAW-EB4).